Here is a 365-residue protein sequence, read N- to C-terminus: Popy Class I histocompatibility antigen, A-1 alpha chain (365 aa).

A signal peptide spans 1-24 (MAIMAPRTLLLLLSGALALTQTWA). An alpha-1 region spans residues 25 to 114 (GSHSMRYFST…LRGYYNQSDG (90 aa)). At 25-308 (GSHSMRYFST…ELSSQPTIPI (284 aa)) the chain is on the extracellular side. Asn110 is a glycosylation site (N-linked (GlcNAc...) asparagine). Residues 115 to 206 (GSHTIQRMFG…ENGKETLQRT (92 aa)) are alpha-2. Intrachain disulfides connect Cys125–Cys188 and Cys227–Cys283. The interval 207 to 298 (DAPKTHMTHH…GLPEPLTLRW (92 aa)) is alpha-3. The Ig-like C1-type domain occupies 209-297 (PKTHMTHHPV…EGLPEPLTLR (89 aa)). The interval 299–308 (ELSSQPTIPI) is connecting peptide. A helical transmembrane segment spans residues 309–332 (VGIIAGLVLLGAVITGAVVAAVMW). Residues 333 to 365 (RRRNSDRKGGSYSQAASNDSAQGSDVSLTACKV) are Cytoplasmic-facing. Residues 340-365 (KGGSYSQAASNDSAQGSDVSLTACKV) form a disordered region. A Phosphoserine modification is found at Ser343. Residues 343 to 359 (SYSQAASNDSAQGSDVS) are compositionally biased toward polar residues. Tyr344 bears the Phosphotyrosine mark. 5 positions are modified to phosphoserine: Ser345, Ser349, Ser352, Ser356, and Ser359.

It belongs to the MHC class I family. In terms of assembly, heterodimer of an alpha chain and a beta chain (beta-2-microglobulin).

It is found in the membrane. Functionally, involved in the presentation of foreign antigens to the immune system. The protein is Popy Class I histocompatibility antigen, A-1 alpha chain of Pongo pygmaeus (Bornean orangutan).